A 1193-amino-acid chain; its full sequence is DNA-directed RNA polymerase subunit beta (1193 aa).

The tract at residues 1173–1193 (QQAKEAAELEKAKEEALDKTE) is disordered. Positions 1177 to 1193 (EAAELEKAKEEALDKTE) are enriched in basic and acidic residues.

The protein belongs to the RNA polymerase beta chain family. In terms of assembly, the RNAP catalytic core consists of 2 alpha, 1 beta, 1 beta' and 1 omega subunit. When a sigma factor is associated with the core the holoenzyme is formed, which can initiate transcription.

The catalysed reaction is RNA(n) + a ribonucleoside 5'-triphosphate = RNA(n+1) + diphosphate. Its function is as follows. DNA-dependent RNA polymerase catalyzes the transcription of DNA into RNA using the four ribonucleoside triphosphates as substrates. This Streptococcus thermophilus (strain CNRZ 1066) protein is DNA-directed RNA polymerase subunit beta.